The primary structure comprises 313 residues: Beta-ketoacyl-[acyl-carrier-protein] synthase III (313 aa).

Active-site residues include Cys-112 and His-238. The interval 239–243 (QANIR) is ACP-binding. Asn-268 is a catalytic residue.

Belongs to the thiolase-like superfamily. FabH family. Homodimer.

The protein localises to the cytoplasm. The catalysed reaction is malonyl-[ACP] + acetyl-CoA + H(+) = 3-oxobutanoyl-[ACP] + CO2 + CoA. It functions in the pathway lipid metabolism; fatty acid biosynthesis. In terms of biological role, catalyzes the condensation reaction of fatty acid synthesis by the addition to an acyl acceptor of two carbons from malonyl-ACP. Catalyzes the first condensation reaction which initiates fatty acid synthesis and may therefore play a role in governing the total rate of fatty acid production. Possesses both acetoacetyl-ACP synthase and acetyl transacylase activities. Its substrate specificity determines the biosynthesis of branched-chain and/or straight-chain of fatty acids. The chain is Beta-ketoacyl-[acyl-carrier-protein] synthase III from Staphylococcus saprophyticus subsp. saprophyticus (strain ATCC 15305 / DSM 20229 / NCIMB 8711 / NCTC 7292 / S-41).